The following is a 55-amino-acid chain: Large ribosomal subunit protein uL30 (55 aa).

The protein belongs to the universal ribosomal protein uL30 family. As to quaternary structure, part of the 50S ribosomal subunit.

In terms of biological role, binds the 5S and 23S rRNAs. The protein is Large ribosomal subunit protein uL30 of Deinococcus radiodurans (strain ATCC 13939 / DSM 20539 / JCM 16871 / CCUG 27074 / LMG 4051 / NBRC 15346 / NCIMB 9279 / VKM B-1422 / R1).